Consider the following 1129-residue polypeptide: Serine/threonine-protein kinase LATS1 (1129 aa).

Residues 1–11 are compositionally biased toward basic and acidic residues; sequence MKRGEKPEGYR. The tract at residues 1 to 71 is disordered; it reads MKRGEKPEGY…PRQVRNPPKF (71 aa). The segment covering 19–30 has biased composition (polar residues); sequence PASNYPGSSRQM. The span at 46 to 64 shows a compositional bias: basic and acidic residues; that stretch reads DASKAEHNLNKMSTEDPRQ. The 42-residue stretch at 100 to 141 folds into the UBA domain; that stretch reads EVNPQMFQDLQAAGFDEDMVIQALQKTNNRSIEAAVEFISKM. Disordered regions lie at residues 148-216 and 228-276; these read REQM…RPLS and PSNG…QTKR. Residues 235-268 show a composition bias toward pro residues; that stretch reads NPPPPPQVRSVTPPPPPRGQTPPPRGTTPPPPSW. Threonine 246 is subject to Phosphothreonine. Position 278 is a phosphoserine (serine 278). Disordered stretches follow at residues 292 to 317, 363 to 407, 432 to 492, and 513 to 630; these read PPGAWQEGYPPPPLTTSPMNPPSQAQ, PTGS…VPQS, WPQS…TPAP, and PTHP…ESRI. The span at 300–312 shows a compositional bias: pro residues; sequence YPPPPLTTSPMNP. A PPxY motif 1 motif is present at residues 372 to 375; the sequence is PPPY. The span at 380–392 shows a compositional bias: polar residues; that stretch reads ANGQSPSALQTGA. Over residues 433–445 the composition is skewed to low complexity; the sequence is PQSSSAPAQSSPS. Positions 453-481 are enriched in polar residues; that stretch reads WQPNIPVRSNSFNNPLGSRASHSANSQPS. Serine 463 carries the post-translational modification Phosphoserine; by NUAK1 and NUAK2. 2 stretches are compositionally biased toward low complexity: residues 482–492 and 520–530; these read ATTVTAITPAP and PQPVQTVQPTP. The segment at 525-654 is interaction with YAP1; it reads TVQPTPFSEG…HVENVLKSHQ (130 aa). Positions 555 to 558 match the PPxY motif 2 motif; sequence PPPY. The span at 578–608 shows a compositional bias: basic and acidic residues; sequence PCKDEQPSLPKEDDSEKSADSGDSGDKEKKQ. Serine 612 bears the Phosphoserine mark. Residues 620–629 show a composition bias toward basic and acidic residues; that stretch reads KKDEERRESR. At serine 673 the chain carries Phosphoserine. Residues 704–1009 enclose the Protein kinase domain; that stretch reads FVKIKTLGIG…ADEIKAHPFF (306 aa). ATP contacts are provided by residues 710-718 and lysine 733; that span reads LGIGAFGEV. The active-site Proton acceptor is aspartate 827. Serine 908 carries the post-translational modification Phosphoserine; by STK3/MST2. The AGC-kinase C-terminal domain maps to 1010–1089; that stretch reads KTIDFSSDLR…RRFFDDNGYP (80 aa). Threonine 1078 carries the phosphothreonine; by STK3/MST2 modification. Residues 1104–1129 are disordered; that stretch reads QGSEQQSDEDDQHTSSDGNNRDLVYV.

This sequence belongs to the protein kinase superfamily. AGC Ser/Thr protein kinase family. As to quaternary structure, complexes with CDK1 in early mitosis. LATS1-associated CDK1 has no mitotic cyclin partner and no apparent kinase activity. Binds phosphorylated ZYX, locating this protein to the mitotic spindle and suggesting a role for actin regulatory proteins during mitosis. Binds to and colocalizes with LIMK1 at the actomyosin contractile ring during cytokinesis. Interacts (via PPxY motif 2) with YAP1 (via WW domains). Interacts with MOB1A and MOB1B. Interacts with LIMD1, WTIP and AJUBA. Interacts with ESR1, DCAF1 and DCAF13; probably recruits DCAF1 and DCAF13 to ESR1 to promote ESR1 ubiquitination and ubiquitin-mediated proteasomal degradation. Interacts with STK3/MST2; this interaction is inhibited in the presence of DLG5. Interacts with SCRIB in the presence of DLG5. Interacts with WWTR1/TAZ. Interacts with WWC1, WWC2 and WWC3 (via their WW domains). It depends on Mg(2+) as a cofactor. Post-translationally, autophosphorylated and phosphorylated during M-phase of the cell cycle. Phosphorylated by STK3/MST2 at Ser-908 and Thr-1078, which results in its activation. Phosphorylated by MAP4Ks; in parallel to STK3/MST2 and resulting to its activation. Phosphorylation at Ser-463 by NUAK1 and NUAK2 leads to decreased protein level and is required to regulate cellular senescence and cellular ploidy.

The protein localises to the cytoplasm. Its subcellular location is the cytoskeleton. It localises to the microtubule organizing center. The protein resides in the centrosome. It is found in the spindle. The protein localises to the midbody. Its subcellular location is the spindle pole body. It carries out the reaction L-seryl-[protein] + ATP = O-phospho-L-seryl-[protein] + ADP + H(+). The enzyme catalyses L-threonyl-[protein] + ATP = O-phospho-L-threonyl-[protein] + ADP + H(+). Its function is as follows. Negative regulator of YAP1 in the Hippo signaling pathway that plays a pivotal role in organ size control and tumor suppression by restricting proliferation and promoting apoptosis. The core of this pathway is composed of a kinase cascade wherein STK3/MST2 and STK4/MST1, in complex with its regulatory protein SAV1, phosphorylates and activates LATS1/2 in complex with its regulatory protein MOB1, which in turn phosphorylates and inactivates YAP1 oncoprotein and WWTR1/TAZ. Phosphorylation of YAP1 by LATS1 inhibits its translocation into the nucleus to regulate cellular genes important for cell proliferation, cell death, and cell migration. Acts as a tumor suppressor which plays a critical role in maintenance of ploidy through its actions in both mitotic progression and the G1 tetraploidy checkpoint. Negatively regulates G2/M transition by down-regulating CDK1 kinase activity. Involved in the control of p53 expression. Affects cytokinesis by regulating actin polymerization through negative modulation of LIMK1. May also play a role in endocrine function. Plays a role in mammary gland epithelial cell differentiation, both through the Hippo signaling pathway and the intracellular estrogen receptor signaling pathway by promoting the degradation of ESR1. Acts as an activator of the NLRP3 inflammasome by mediating phosphorylation of 'Ser-265' of NLRP3 following NLRP3 palmitoylation, promoting NLRP3 activation by NEK7. In Mus musculus (Mouse), this protein is Serine/threonine-protein kinase LATS1.